Here is a 445-residue protein sequence, read N- to C-terminus: Argininosuccinate synthase (445 aa).

ATP is bound by residues 17–25 (AFSGGLDTS) and Ala-43. Tyr-99 contributes to the L-citrulline binding site. ATP-binding residues include Gly-129 and Thr-131. L-aspartate-binding residues include Thr-131, Asn-135, and Asp-136. Asn-135 lines the L-citrulline pocket. Asp-136 contacts ATP. Residues Arg-139 and Ser-192 each coordinate L-citrulline. Asp-194 contacts ATP. L-citrulline is bound by residues Thr-201, Glu-203, and Glu-280.

The protein belongs to the argininosuccinate synthase family. Type 2 subfamily. As to quaternary structure, homotetramer.

The protein resides in the cytoplasm. It catalyses the reaction L-citrulline + L-aspartate + ATP = 2-(N(omega)-L-arginino)succinate + AMP + diphosphate + H(+). It participates in amino-acid biosynthesis; L-arginine biosynthesis; L-arginine from L-ornithine and carbamoyl phosphate: step 2/3. The chain is Argininosuccinate synthase from Burkholderia cenocepacia (strain HI2424).